Consider the following 435-residue polypeptide: Serine hydroxymethyltransferase (435 aa).

(6S)-5,6,7,8-tetrahydrofolate-binding positions include leucine 131 and 135 to 137; that span reads GHL. N6-(pyridoxal phosphate)lysine is present on lysine 240.

The protein belongs to the SHMT family. As to quaternary structure, homodimer. Pyridoxal 5'-phosphate is required as a cofactor.

The protein resides in the cytoplasm. It carries out the reaction (6R)-5,10-methylene-5,6,7,8-tetrahydrofolate + glycine + H2O = (6S)-5,6,7,8-tetrahydrofolate + L-serine. It functions in the pathway one-carbon metabolism; tetrahydrofolate interconversion. It participates in amino-acid biosynthesis; glycine biosynthesis; glycine from L-serine: step 1/1. Functionally, catalyzes the reversible interconversion of serine and glycine with tetrahydrofolate (THF) serving as the one-carbon carrier. This reaction serves as the major source of one-carbon groups required for the biosynthesis of purines, thymidylate, methionine, and other important biomolecules. Also exhibits THF-independent aldolase activity toward beta-hydroxyamino acids, producing glycine and aldehydes, via a retro-aldol mechanism. This Bifidobacterium longum subsp. infantis (strain ATCC 15697 / DSM 20088 / JCM 1222 / NCTC 11817 / S12) protein is Serine hydroxymethyltransferase.